The primary structure comprises 283 residues: uncharacterized protein (283 aa).

This is an uncharacterized protein from Streptomyces coelicolor (strain ATCC BAA-471 / A3(2) / M145).